The primary structure comprises 355 residues: Guanine nucleotide-binding protein G(i) subunit alpha-2 (355 aa).

Gly2 carries the N-myristoyl glycine lipid modification. Cys3 carries S-palmitoyl cysteine lipidation. The region spanning 32 to 355 is the G-alpha domain; sequence REVKLLLLGA…KNNLKDCGLF (324 aa). Positions 35–48 are G1 motif; the sequence is KLLLLGAGESGKST. GTP-binding positions include 40 to 47, 176 to 182, 201 to 205, 270 to 273, and Ala327; these read GAGESGKS, LRTRVKT, DVGGQ, and NKKD. Residues Ser47 and Thr182 each contribute to the Mg(2+) site. Residues 174–182 form a G2 motif region; the sequence is DVLRTRVKT. The tract at residues 197 to 206 is G3 motif; it reads FKMFDVGGQR. A G4 motif region spans residues 266-273; the sequence is ILFLNKKD. The interval 325 to 330 is G5 motif; the sequence is TCATDT.

This sequence belongs to the G-alpha family. G(i/o/t/z) subfamily. In terms of assembly, g proteins are composed of 3 units; alpha, beta and gamma. The alpha chain contains the guanine nucleotide binding site. In this context, interacts with GNB2. Interacts with UNC5B. Interacts with GPSM1. Interacts with RGS12 and RGS14. Interacts (inactive GDP-bound form) with NUCB1 (via GBA motif); the interaction leads to activation of GNAI3. Interacts (inactive GDP-bound form) with CCDC88C/DAPLE (via GBA motif). Interacts (inactive GDP-bound form) with CCDC8A/GIV (via GBA motif). Interacts with CXCR1 and CXCR2.

The protein resides in the cytoplasm. It is found in the cytoskeleton. Its subcellular location is the microtubule organizing center. It localises to the centrosome. The protein localises to the cell membrane. The protein resides in the membrane. Guanine nucleotide-binding proteins (G proteins) are involved as modulators or transducers in various transmembrane signaling systems. The G(i) proteins are involved in hormonal regulation of adenylate cyclase: they inhibit the cyclase in response to beta-adrenergic stimuli. May play a role in cell division. This chain is Guanine nucleotide-binding protein G(i) subunit alpha-2 (GNAI2), found in Canis lupus familiaris (Dog).